Consider the following 363-residue polypeptide: Protein Wnt-5b (363 aa).

Positions 1-21 are cleaved as a signal peptide; the sequence is MDVRMNQGHLLLAVTLIVCNS. A disulfide bond links Cys-87 and Cys-98. Asn-97 and Asn-103 each carry an N-linked (GlcNAc...) asparagine glycan. 10 cysteine pairs are disulfide-bonded: Cys-137/Cys-145, Cys-147/Cys-165, Cys-221/Cys-235, Cys-223/Cys-230, Cys-292/Cys-323, Cys-308/Cys-318, Cys-322/Cys-362, Cys-338/Cys-353, Cys-340/Cys-350, and Cys-345/Cys-346. A lipid anchor (O-palmitoleoyl serine; by PORCN) is attached at Ser-227. N-linked (GlcNAc...) asparagine glycans are attached at residues Asn-295 and Asn-309.

It belongs to the Wnt family. In terms of processing, palmitoleoylation is required for efficient binding to frizzled receptors. Depalmitoleoylation leads to Wnt signaling pathway inhibition.

The protein localises to the secreted. It is found in the extracellular space. The protein resides in the extracellular matrix. In terms of biological role, ligand for members of the frizzled family of seven transmembrane receptors. Can activate or inhibit canonical Wnt signaling, depending on receptor context. Required during embryogenesis for extension of the primary anterior-posterior axis. Regulates convergent extension movements and hypaxial myogenesis during gastrulation via activation of non-canonical Wnt signaling. The protein is Protein Wnt-5b (wnt5b) of Danio rerio (Zebrafish).